The chain runs to 412 residues: B3 domain-containing protein Os02g0683500 (412 aa).

The segment at 1–87 is disordered; it reads MEFTTSSRFS…GGGGGGGGEA (87 aa). Residues 30 to 65 are compositionally biased toward low complexity; it reads TATAEAAPAPTSSSSSPAHHAASASASASASGSSTP. Over residues 73–86 the composition is skewed to gly residues; the sequence is GASGSGGGGGGGGE. Residues 96–200 constitute a DNA-binding region (TF-B3); that stretch reads FDKVVTPSDV…RHRLFIDWKR (105 aa). The tract at residues 374-412 is disordered; it reads RLLELPPHHHHGAESSAASSPSSSSSSKRDAHSALDLDL. A compositionally biased stretch (low complexity) spans 387 to 399; the sequence is ESSAASSPSSSSS. Residues 400–412 are compositionally biased toward basic and acidic residues; that stretch reads SKRDAHSALDLDL.

It is found in the nucleus. The chain is B3 domain-containing protein Os02g0683500 from Oryza sativa subsp. japonica (Rice).